The sequence spans 123 residues: Unclassified hydrophobin 9 (123 aa).

The N-terminal stretch at 1 to 24 (MFFFNTKPIVFLVVLSVVATFAAA) is a signal peptide. 4 disulfides stabilise this stretch: cysteine 37-cysteine 103, cysteine 45-cysteine 97, cysteine 46-cysteine 88, and cysteine 104-cysteine 117.

This sequence belongs to the fungal hydrophobin family. In terms of assembly, self-assembles to form functional amyloid fibrils called rodlets. Self-assembly into fibrillar rodlets occurs spontaneously at hydrophobic:hydrophilic interfaces and the rodlets further associate laterally to form amphipathic monolayers.

The protein localises to the secreted. Its subcellular location is the cell wall. In terms of biological role, aerial growth, conidiation, and dispersal of filamentous fungi in the environment rely upon a capability of their secreting small amphipathic proteins called hydrophobins (HPBs) with low sequence identity. Class I can self-assemble into an outermost layer of rodlet bundles on aerial cell surfaces, conferring cellular hydrophobicity that supports fungal growth, development and dispersal; whereas Class II form highly ordered films at water-air interfaces through intermolecular interactions but contribute nothing to the rodlet structure. The protein is Unclassified hydrophobin 9 of Pleurotus ostreatus (strain PC15) (Oyster mushroom).